A 391-amino-acid chain; its full sequence is uncharacterized protein (391 aa).

Residues F4–Y24 traverse the membrane as a helical segment.

It localises to the membrane. This is an uncharacterized protein from Haemophilus influenzae (strain ATCC 51907 / DSM 11121 / KW20 / Rd).